The sequence spans 537 residues: MELCSSSPSSSLLRICSSSAPEISFSSSISQFPSKTQSILTKSRFQNLRICASVTAETQGLPRDSPQRLLKELAQRKTATGPKKKVPPKRFILRPPLDDKKLAERFLNSPQLSLKSFPLLSSCLPSSKLNNADKTWIDEYLLEVKQALGYSLEPSESLGDDNPAKHFDTLLYLAFQHPSCDRARARHVKNGHSRLWFLGQYVLELALTEFFLQRYPRESPGPMRERVFALIGKRYLPKWIKAASLQNLIFPYDDMDKLIRKEREPPVKSVFWALFGAIYLCFGMPEVYRVLFEVFGMDPDADECQPRSRRQLEDVDYVSVEFEGKKLGWQDIATYKPPEDALFAHPRLFRACVPPGMHRFRGNIWDFDSKPKVMQTLGYPLTMNDRIKEITEARNIELGLGLQLCFLHPSKHKFEHPRFCFERLEYVGQKIQDIAMAERLLMKHLDAPGKWLQEKHRRLLMNKFCGRYLREKRLHNFIIYSEEVHDRYEHNRRLRNPATTAVQQAIHGLAYTIYGKPDVRRLMFEVFDFEQIQPKAV.

A chloroplast-targeting transit peptide spans 1–51 (MELCSSSPSSSLLRICSSSAPEISFSSSISQFPSKTQSILTKSRFQNLRIC). 2 consecutive RNase III domains span residues 141-283 (LLEV…LCFG) and 415-515 (EHPR…TIYG).

Interacts with RNA. Part of large ribonucleo-protein particles that contain CAF1 and/or CAF2.

It localises to the plastid. The protein resides in the chloroplast. In terms of biological role, binds specific group II introns in chloroplasts and facilitates their splicing. Acts on both subgroup IIA and subgroup IIB introns. The substrates of the subgroup II also require the CRM domain proteins CAF1 or CAF2. Binds both single-stranded and double-stranded RNA non-specifically, but lacks endonuclease activity. Required for plastid ribosome biogenesis. The chain is Ribonuclease III domain-containing protein RNC1, chloroplastic from Arabidopsis thaliana (Mouse-ear cress).